The following is a 306-amino-acid chain: Acetylglutamate kinase (306 aa).

Residues 75–76 (GG), R97, and N197 each bind substrate.

The protein belongs to the acetylglutamate kinase family. ArgB subfamily.

The protein resides in the cytoplasm. The enzyme catalyses N-acetyl-L-glutamate + ATP = N-acetyl-L-glutamyl 5-phosphate + ADP. It functions in the pathway amino-acid biosynthesis; L-arginine biosynthesis; N(2)-acetyl-L-ornithine from L-glutamate: step 2/4. Catalyzes the ATP-dependent phosphorylation of N-acetyl-L-glutamate. This is Acetylglutamate kinase from Streptomyces coelicolor (strain ATCC BAA-471 / A3(2) / M145).